The primary structure comprises 471 residues: Putative multidrug resistance protein MdtD (471 aa).

Topologically, residues 1–11 (MTDLPDSTRWQ) are periplasmic. The helical transmembrane segment at 12-32 (LWIVAFGFFMQSLDTTIVNTA) threads the bilayer. Topologically, residues 33 to 48 (LPSMAQSLGESPLHMH) are cytoplasmic. A helical transmembrane segment spans residues 49–69 (MVIVSYVLTVAVMLPASGWLA). Over 70–76 (DKVGVRN) the chain is Periplasmic. The chain crosses the membrane as a helical span at residues 77–97 (IFFTAIVLFTLGSLFCALSGT). Residues 98 to 101 (LNEL) are Cytoplasmic-facing. A helical membrane pass occupies residues 102–124 (LLARALQGVGGAMMVPVGRLTVM). At 125-137 (KIVPREQYMAAMT) the chain is on the periplasmic side. The chain crosses the membrane as a helical span at residues 138-158 (FVTLPGQVGPLLGPALGGLLV). The Cytoplasmic portion of the chain corresponds to 159–164 (EYASWH). Residues 165–185 (WIFLINIPVGIIGAIATLLLM) form a helical membrane-spanning segment. Residues 186–196 (PNYTMQTRRFD) are Periplasmic-facing. The chain crosses the membrane as a helical span at residues 197 to 217 (LSGFLLLAVGMAVLTLALDGS). Residues 218–224 (KGTGLSP) lie on the Cytoplasmic side of the membrane. A helical transmembrane segment spans residues 225-245 (LTIAGLVAVGVVALVLYLLHA). At 246-262 (RNNNRALFSLKLFRTRT) the chain is on the periplasmic side. The chain crosses the membrane as a helical span at residues 263–283 (FSLGLAGSFAGRIGSGMLPFM). At 284 to 285 (TP) the chain is on the cytoplasmic side. A helical transmembrane segment spans residues 286 to 306 (VFLQIGLGFSPFHAGLMMIPM). Over 307–341 (VLGSMGMKRIVVQVVNRFGYRRVLVATTLGLSLVT) the chain is Periplasmic. A helical transmembrane segment spans residues 342 to 362 (LLFMTTALLGWYYVLPFVLFL). Over 363–395 (QGMVNSTRFSSMNTLTLKDLPDNLASSGNSLLS) the chain is Cytoplasmic. The helical transmembrane segment at 396–416 (MIMQLSMSIGVTIAGLLLGLF) threads the bilayer. Residues 417-430 (GSQHVSVDSGTTQT) lie on the Periplasmic side of the membrane. A helical transmembrane segment spans residues 431 to 451 (VFMYTWLSMALIIALPAFIFA). Residues 452–471 (RVPNDTHQNVAISRRKRSAQ) lie on the Cytoplasmic side of the membrane.

The protein belongs to the major facilitator superfamily. TCR/Tet family.

It is found in the cell inner membrane. The protein is Putative multidrug resistance protein MdtD of Escherichia coli (strain K12 / MC4100 / BW2952).